Reading from the N-terminus, the 192-residue chain is Ras-like GTP-binding protein O-RHO (192 aa).

12–19 (GDGACGKT) contacts GTP. Residues 34–42 (YVPTVFENY) carry the Effector region motif. GTP-binding positions include 59–63 (DTAGQ) and 117–120 (NKKT). Cysteine 189 is modified (cysteine methyl ester). Cysteine 189 carries the S-geranylgeranyl cysteine lipid modification. A propeptide spans 190–192 (LLL) (removed in mature form).

The protein belongs to the small GTPase superfamily. Rho family.

It localises to the cell membrane. This is Ras-like GTP-binding protein O-RHO from Diplobatis ommata (Ocellated electric ray).